We begin with the raw amino-acid sequence, 329 residues long: Capsular polysaccharide phosphotransferase WcwK (329 aa).

Belongs to the stealth family.

The sequence is that of Capsular polysaccharide phosphotransferase WcwK (wcwK) from Streptococcus pneumoniae.